The primary structure comprises 103 residues: MPKAAAKSKTTGKVEKRRAKKDPNAPKRGLSAYMFFANEQRENVREENPGVSFGQVGKILGERWKALSDKQRAPYEAKAAADKKRYEDEKQAYNAEADEEESS.

Disordered stretches follow at residues 1–30 (MPKAAAKSKTTGKVEKRRAKKDPNAPKRGL) and 70–103 (KQRAPYEAKAAADKKRYEDEKQAYNAEADEEESS). The HMG box DNA-binding region spans 26–94 (PKRGLSAYMF…RYEDEKQAYN (69 aa)). A compositionally biased stretch (basic and acidic residues) spans 70–91 (KQRAPYEAKAAADKKRYEDEKQ).

It belongs to the NHP6 family. In terms of assembly, weakly associates with the stable heterodimer of ctc-1/pob3 and ctc-2/spt16 to form the FACT complex.

It localises to the nucleus. The protein localises to the chromosome. In terms of biological role, DNA-binding protein that induces severe bending of DNA. Required for DNA-binding by the FACT complex, a general chromatin factor that acts to reorganize nucleosomes. The FACT complex is involved in multiple processes that require DNA as a template such as mRNA elongation, DNA replication and DNA repair. Also augments the fidelity of transcription by RNA polymerase III independently of any role in the FACT complex. The chain is Non-histone chromosomal protein 6 (nhp-1) from Neurospora crassa (strain ATCC 24698 / 74-OR23-1A / CBS 708.71 / DSM 1257 / FGSC 987).